Reading from the N-terminus, the 52-residue chain is uncharacterized protein (52 aa).

This is an uncharacterized protein from Rickettsia conorii (strain ATCC VR-613 / Malish 7).